An 880-amino-acid polypeptide reads, in one-letter code: Valine--tRNA ligase (880 aa).

The 'HIGH' region motif lies at 49–59 (PNVTGKLHLGH). The 'KMSKS' region motif lies at 525–529 (KMSKS). Lys528 provides a ligand contact to ATP. Residues 809 to 880 (LEGLINIDEE…VEKRIAELKN (72 aa)) are a coiled coil.

This sequence belongs to the class-I aminoacyl-tRNA synthetase family. ValS type 1 subfamily. In terms of assembly, monomer.

The protein resides in the cytoplasm. The enzyme catalyses tRNA(Val) + L-valine + ATP = L-valyl-tRNA(Val) + AMP + diphosphate. Functionally, catalyzes the attachment of valine to tRNA(Val). As ValRS can inadvertently accommodate and process structurally similar amino acids such as threonine, to avoid such errors, it has a 'posttransfer' editing activity that hydrolyzes mischarged Thr-tRNA(Val) in a tRNA-dependent manner. The chain is Valine--tRNA ligase from Bacillus licheniformis (strain ATCC 14580 / DSM 13 / JCM 2505 / CCUG 7422 / NBRC 12200 / NCIMB 9375 / NCTC 10341 / NRRL NRS-1264 / Gibson 46).